The sequence spans 855 residues: DNA mismatch repair protein MutS (855 aa).

Position 613–620 (613–620 (GPNMGGKS)) interacts with ATP. A disordered region spans residues 796 to 816 (TTSLPHEMPSQQSGKPASPMQ).

It belongs to the DNA mismatch repair MutS family.

In terms of biological role, this protein is involved in the repair of mismatches in DNA. It is possible that it carries out the mismatch recognition step. This protein has a weak ATPase activity. This Pseudomonas aeruginosa (strain ATCC 15692 / DSM 22644 / CIP 104116 / JCM 14847 / LMG 12228 / 1C / PRS 101 / PAO1) protein is DNA mismatch repair protein MutS.